The chain runs to 430 residues: UDP-N-acetylmuramoylalanine--D-glutamate ligase (430 aa).

109 to 115 contacts ATP; sequence GTDGKST.

The protein belongs to the MurCDEF family.

The protein resides in the cytoplasm. The enzyme catalyses UDP-N-acetyl-alpha-D-muramoyl-L-alanine + D-glutamate + ATP = UDP-N-acetyl-alpha-D-muramoyl-L-alanyl-D-glutamate + ADP + phosphate + H(+). It functions in the pathway cell wall biogenesis; peptidoglycan biosynthesis. Functionally, cell wall formation. Catalyzes the addition of glutamate to the nucleotide precursor UDP-N-acetylmuramoyl-L-alanine (UMA). In Thermotoga petrophila (strain ATCC BAA-488 / DSM 13995 / JCM 10881 / RKU-1), this protein is UDP-N-acetylmuramoylalanine--D-glutamate ligase.